A 328-amino-acid chain; its full sequence is Probable GDP-L-fucose synthase 1 (328 aa).

25-31 contacts NADP(+); it reads GHRGLVG. Tyr-152 functions as the Proton donor/acceptor in the catalytic mechanism. Residues Lys-156, 179–182, and His-195 contribute to the NADP(+) site; that span reads PTNL. Substrate is bound by residues Arg-203, Trp-218, Arg-225, and Asp-285.

The protein belongs to the NAD(P)-dependent epimerase/dehydratase family. Fucose synthase subfamily. In terms of assembly, homodimer.

It catalyses the reaction GDP-beta-L-fucose + NADP(+) = GDP-4-dehydro-alpha-D-rhamnose + NADPH + H(+). It functions in the pathway nucleotide-sugar biosynthesis; GDP-L-fucose biosynthesis via de novo pathway; GDP-L-fucose from GDP-alpha-D-mannose: step 2/2. Its function is as follows. Catalyzes the two-step NADP-dependent conversion of GDP-4-dehydro-6-deoxy-D-mannose to GDP-fucose, involving an epimerase and a reductase reaction. The polypeptide is Probable GDP-L-fucose synthase 1 (Oryza sativa subsp. japonica (Rice)).